A 264-amino-acid polypeptide reads, in one-letter code: S-adenosylmethionine decarboxylase proenzyme (264 aa).

Serine 112 acts as the Schiff-base intermediate with substrate; via pyruvic acid in catalysis. Serine 112 is modified (pyruvic acid (Ser); by autocatalysis). Histidine 117 functions as the Proton acceptor; for processing activity in the catalytic mechanism. The active-site Proton donor; for catalytic activity is cysteine 140.

The protein belongs to the prokaryotic AdoMetDC family. Type 2 subfamily. As to quaternary structure, heterooctamer of four alpha and four beta chains arranged as a tetramer of alpha/beta heterodimers. Pyruvate serves as cofactor. In terms of processing, is synthesized initially as an inactive proenzyme. Formation of the active enzyme involves a self-maturation process in which the active site pyruvoyl group is generated from an internal serine residue via an autocatalytic post-translational modification. Two non-identical subunits are generated from the proenzyme in this reaction, and the pyruvate is formed at the N-terminus of the alpha chain, which is derived from the carboxyl end of the proenzyme. The post-translation cleavage follows an unusual pathway, termed non-hydrolytic serinolysis, in which the side chain hydroxyl group of the serine supplies its oxygen atom to form the C-terminus of the beta chain, while the remainder of the serine residue undergoes an oxidative deamination to produce ammonia and the pyruvoyl group blocking the N-terminus of the alpha chain.

The catalysed reaction is S-adenosyl-L-methionine + H(+) = S-adenosyl 3-(methylsulfanyl)propylamine + CO2. It participates in amine and polyamine biosynthesis; S-adenosylmethioninamine biosynthesis; S-adenosylmethioninamine from S-adenosyl-L-methionine: step 1/1. Its function is as follows. Catalyzes the decarboxylation of S-adenosylmethionine to S-adenosylmethioninamine (dcAdoMet), the propylamine donor required for the synthesis of the polyamines spermine and spermidine from the diamine putrescine. This is S-adenosylmethionine decarboxylase proenzyme from Salmonella agona (strain SL483).